We begin with the raw amino-acid sequence, 381 residues long: Putative glutamate--cysteine ligase 2 (381 aa).

It belongs to the glutamate--cysteine ligase type 2 family. YbdK subfamily.

It carries out the reaction L-cysteine + L-glutamate + ATP = gamma-L-glutamyl-L-cysteine + ADP + phosphate + H(+). In terms of biological role, ATP-dependent carboxylate-amine ligase which exhibits weak glutamate--cysteine ligase activity. This chain is Putative glutamate--cysteine ligase 2, found in Polaromonas naphthalenivorans (strain CJ2).